We begin with the raw amino-acid sequence, 275 residues long: MEPSLLMWRFFVFIVVPGCVTEACHDDPPSLRNAMFKVLRYEVGTMINCDCKAGFRRVSAVMRCVGDSSHSAWNNRCFCNSTSPAKNPVKPVTPGSEEQRERKPTDAQSQTQPPEQADLPGHCEEPPPWEHEREPLKRVYHFTLGQTVHYQCAQGFRALHTGPAESTCTMIHGEMRWTRPRLKCISEGANSQAPDEAEPPESTEAPPGSGTFLTTRMAGTTDFQKPTDVVATLDTFIFTTEYQIAVAGCILLLSSILLLSCLTWQRRWKKNRRTI.

A signal peptide spans 1–21 (MEPSLLMWRFFVFIVVPGCVT). 2 consecutive Sushi domains span residues 22–81 (EACH…FCNS) and 121–186 (GHCE…KCIS). Residues 22–243 (EACHDDPPSL…DTFIFTTEYQ (222 aa)) lie on the Extracellular side of the membrane. Intrachain disulfides connect C24–C64, C49–C77, and C51–C79. N80 carries an N-linked (GlcNAc...) asparagine glycan. A disordered region spans residues 86-130 (KNPVKPVTPGSEEQRERKPTDAQSQTQPPEQADLPGHCEEPPPWE). A compositionally biased stretch (basic and acidic residues) spans 121–130 (GHCEEPPPWE). 2 disulfides stabilise this stretch: C123-C168 and C152-C184. The tract at residues 188–213 (GANSQAPDEAEPPESTEAPPGSGTFL) is disordered. The helical transmembrane segment at 244–262 (IAVAGCILLLSSILLLSCL) threads the bilayer. At 263–275 (TWQRRWKKNRRTI) the chain is on the cytoplasmic side.

In terms of assembly, non-covalent dimer of an alpha and a beta subunit. IL2R exists in 3 different forms: a high affinity dimer, an intermediate affinity monomer (beta subunit), and a low affinity monomer (alpha subunit). The high and intermediate affinity forms also associate with a gamma subunit.

The protein localises to the membrane. In terms of biological role, receptor for interleukin-2. The receptor is involved in the regulation of immune tolerance by controlling regulatory T cells (TREGs) activity. TREGs suppress the activation and expansion of autoreactive T-cells. This Ovis aries (Sheep) protein is Interleukin-2 receptor subunit alpha (IL2RA).